A 102-amino-acid polypeptide reads, in one-letter code: uncharacterized protein (102 aa).

The next 2 helical transmembrane spans lie at 21–43 (FSSS…TPVF) and 58–80 (SFAV…YFFC).

Its subcellular location is the membrane. This is an uncharacterized protein from Saccharomyces cerevisiae (strain ATCC 204508 / S288c) (Baker's yeast).